The chain runs to 184 residues: MASEEIISGMKTKMDKTIDLVKKDFGTVRTGRANPSLVEDIRVDYYGTLTPINQLGNISVPEPRMLVISPYDKGIMKDIEKAIQASGLGLQPSNDGVVIRIIIPELTGERRKELAKIVKSKSEEKKVAIRNIRRDAMEDLKKHTEGLSQDEIKTIQDRIQKTTDSYIDKISALTAEKEKEITTI.

This sequence belongs to the RRF family.

The protein localises to the cytoplasm. Functionally, responsible for the release of ribosomes from messenger RNA at the termination of protein biosynthesis. May increase the efficiency of translation by recycling ribosomes from one round of translation to another. This Leptospira borgpetersenii serovar Hardjo-bovis (strain JB197) protein is Ribosome-recycling factor.